The primary structure comprises 933 residues: Serine/threonine-protein kinase PknD (933 aa).

Residues 4–291 form the Protein kinase domain; it reads YDIIRMIGKG…ALKADIEQHL (288 aa). ATP-binding positions include 10–18 and lysine 33; that span reads IGKGGMGEV. Aspartate 138 functions as the Proton acceptor in the catalytic mechanism.

This sequence belongs to the protein kinase superfamily. Ser/Thr protein kinase family. Post-translationally, autophosphorylated on serine and threonine residues.

The enzyme catalyses L-seryl-[protein] + ATP = O-phospho-L-seryl-[protein] + ADP + H(+). The catalysed reaction is L-threonyl-[protein] + ATP = O-phospho-L-threonyl-[protein] + ADP + H(+). Functionally, together with the serine/threonine kinase Pkn1, may play a role in the specific interactions with host proteins during intracellular growth. This Chlamydia abortus (strain DSM 27085 / S26/3) (Chlamydophila abortus) protein is Serine/threonine-protein kinase PknD.